The sequence spans 478 residues: ATP synthase subunit beta (478 aa).

161-168 lines the ATP pocket; sequence GGAGVGKT.

Belongs to the ATPase alpha/beta chains family. As to quaternary structure, F-type ATPases have 2 components, CF(1) - the catalytic core - and CF(0) - the membrane proton channel. CF(1) has five subunits: alpha(3), beta(3), gamma(1), delta(1), epsilon(1). CF(0) has four main subunits: a(1), b(1), b'(1) and c(9-12).

Its subcellular location is the cell inner membrane. It carries out the reaction ATP + H2O + 4 H(+)(in) = ADP + phosphate + 5 H(+)(out). In terms of biological role, produces ATP from ADP in the presence of a proton gradient across the membrane. The catalytic sites are hosted primarily by the beta subunits. The sequence is that of ATP synthase subunit beta from Gloeobacter violaceus (strain ATCC 29082 / PCC 7421).